The primary structure comprises 159 residues: Protein-export protein SecB (159 aa).

It belongs to the SecB family. As to quaternary structure, homotetramer, a dimer of dimers. One homotetramer interacts with 1 SecA dimer.

It localises to the cytoplasm. In terms of biological role, one of the proteins required for the normal export of preproteins out of the cell cytoplasm. It is a molecular chaperone that binds to a subset of precursor proteins, maintaining them in a translocation-competent state. It also specifically binds to its receptor SecA. This Shewanella amazonensis (strain ATCC BAA-1098 / SB2B) protein is Protein-export protein SecB.